A 315-amino-acid polypeptide reads, in one-letter code: Manganese-dependent 2,3-dihydroxybiphenyl 1,2-dioxygenase (315 aa).

2 consecutive VOC domains span residues 7 to 121 (KFGH…IYYD) and 150 to 273 (RIDH…LFSG). 3 residues coordinate Mn(2+): His-153, His-216, and Glu-269.

Belongs to the extradiol ring-cleavage dioxygenase family. In terms of assembly, homotetramer. Mn(2+) is required as a cofactor.

It carries out the reaction biphenyl-2,3-diol + O2 = 2-hydroxy-6-oxo-6-phenylhexa-2,4-dienoate + H(+). It functions in the pathway xenobiotic degradation; biphenyl degradation; 2-hydroxy-2,4-pentadienoate and benzoate from biphenyl: step 3/4. Functionally, catalyzes the meta-cleavage of the hydroxylated biphenyl ring. The enzyme can oxidize a wide range of substrates, and the substrate preference order is 2,3-dihydroxybiphenyl &gt; 3-methylcatechol &gt; catechol &gt; 4-methylcatechol &gt; 4-chlorocatechol. The chain is Manganese-dependent 2,3-dihydroxybiphenyl 1,2-dioxygenase (bphC) from Geobacillus genomosp. 3.